Here is a 700-residue protein sequence, read N- to C-terminus: Constitutive coactivator of peroxisome proliferator-activated receptor gamma (700 aa).

Belongs to the constitutive coactivator of PPAR-gamma family. Interacts with ESR1 and RXRA. Interacts with PPARG; in a ligand-independent manner.

It is found in the nucleus. In terms of biological role, functions as a transactivator of PPARG and ESR1. Functions in adipogenesis through PPARG activation. The chain is Constitutive coactivator of peroxisome proliferator-activated receptor gamma (FAM120B) from Bos taurus (Bovine).